An 82-amino-acid polypeptide reads, in one-letter code: Small, acid-soluble spore protein gamma-type (82 aa).

Polar residues-rich tracts occupy residues 1–24 (MANSNNKTNAQQVRKQNQQSASGQ) and 32–50 (ASETNVQQVRKQNQQSAAG). The disordered stretch occupies residues 1–82 (MANSNNKTNA…SAEQNKQQNS (82 aa)). 2 repeats span residues 19 to 45 (QSASGQGQFGTEFASETNVQQVRKQNQ) and 46 to 72 (QSAAGQGQFGTEFASETDAQQVRQQNQ). Over residues 69-82 (QQNQSAEQNKQQNS) the composition is skewed to low complexity.

The protein belongs to the gamma-type SASP family.

SASP are bound to spore DNA. They are double-stranded DNA-binding proteins that cause DNA to change to an a-like conformation. They protect the DNA backbone from chemical and enzymatic cleavage and are thus involved in dormant spore's high resistance to UV light. The sequence is that of Small, acid-soluble spore protein gamma-type from Bacillus subtilis.